The chain runs to 1131 residues: Phytochrome a (1131 aa).

Over residues methionine 1 to arginine 23 the composition is skewed to low complexity. The tract at residues methionine 1–alanine 26 is disordered. In terms of domain architecture, GAF spans serine 219 to phenylalanine 404. Residue cysteine 324 coordinates phytochromobilin. 2 PAS domains span residues valine 620–lysine 690 and valine 750–glutamate 834. The Histidine kinase domain occupies tyrosine 904–alanine 1124.

Belongs to the phytochrome family. As to quaternary structure, homodimer. Post-translationally, contains one covalently linked phytochromobilin chromophore.

Functionally, regulatory photoreceptor which exists in two forms that are reversibly interconvertible by light: the Pr form that absorbs maximally in the red region of the spectrum and the Pfr form that absorbs maximally in the far-red region. Photoconversion of Pr to Pfr induces an array of morphogenic responses, whereas reconversion of Pfr to Pr cancels the induction of those responses. Pfr controls the expression of a number of nuclear genes including those encoding the small subunit of ribulose-bisphosphate carboxylase, chlorophyll A/B binding protein, protochlorophyllide reductase, rRNA, etc. It also controls the expression of its own gene(s) in a negative feedback fashion. This is Phytochrome a (PHYA) from Sorghum bicolor (Sorghum).